Here is a 217-residue protein sequence, read N- to C-terminus: Probable GTP-binding protein EngB (217 aa).

An EngB-type G domain is found at 29–213; it reads GPSEVAFAGR…RQAIAQTVGI (185 aa). GTP-binding positions include 37-44, 64-68, 91-94, 158-161, and 192-194; these read GRSNVGKS, GRTQE, DMPG, TKTD, and TSS. Residues Ser44 and Thr66 each contribute to the Mg(2+) site.

Belongs to the TRAFAC class TrmE-Era-EngA-EngB-Septin-like GTPase superfamily. EngB GTPase family. Requires Mg(2+) as cofactor.

In terms of biological role, necessary for normal cell division and for the maintenance of normal septation. In Rhizobium etli (strain CIAT 652), this protein is Probable GTP-binding protein EngB.